A 460-amino-acid chain; its full sequence is MTGNEKNFNHSKTKKVLVLGLAKSGFSAAKLLHELGALVTVNDGKPFDEKPEAQELLSLGVKVIAGSHPIELLDEEFSLMVKNPGIPYSHPFVQKAQELGIPVITEVELAYEVAECPIIGITGTNGKTTTTTMTGLLLNAGDLPGTARLAGNIGYPASSVAQEATADDKIVMELSSFQLMGITDFRPHVAVVTNIYEAHIDYHKTRKEYVKAKWHLQQNMTEKDYLILNWNQEELRELSKKTKATVLPFATEQKLPKGACSLDGSIYYNQEKIMDITELGVPGSHNVENALAAISVAKLYGISNEAIKNALHHFHGVPHRTQYVGEFQGRKFYNDSKATNILATKMALSGFQLDQLVLIAGGLDRGNSFDELIPALKGIKALITFGETQNRLEDAGKKAGIPVIKTAENAEAAVPIALELSEEGDSILLSPANASWDQYPNFEIRGERFMEAVNKLTIQK.

123–129 (GTNGKTT) contacts ATP.

This sequence belongs to the MurCDEF family.

The protein resides in the cytoplasm. It carries out the reaction UDP-N-acetyl-alpha-D-muramoyl-L-alanine + D-glutamate + ATP = UDP-N-acetyl-alpha-D-muramoyl-L-alanyl-D-glutamate + ADP + phosphate + H(+). It functions in the pathway cell wall biogenesis; peptidoglycan biosynthesis. Its function is as follows. Cell wall formation. Catalyzes the addition of glutamate to the nucleotide precursor UDP-N-acetylmuramoyl-L-alanine (UMA). The chain is UDP-N-acetylmuramoylalanine--D-glutamate ligase (murD) from Enterococcus hirae.